The sequence spans 71 residues: Disintegrin horridistatin-2 (71 aa).

Residues 1–71 (GEECDCGSPA…ADCPRNGLYG (71 aa)) enclose the Disintegrin domain. 6 disulfide bridges follow: C4-C19, C6-C14, C13-C36, C27-C33, C32-C57, and C45-C64. The Cell attachment site signature appears at 49-51 (RGD).

It belongs to the venom metalloproteinase (M12B) family. P-II subfamily. P-IIa sub-subfamily. Monomer (disintegrin). Expressed by the venom gland.

Its subcellular location is the secreted. In terms of biological role, inhibits ADP-induced platelet aggregation (IC(50) is 16.2 nM) by binding to alpha-IIb/beta-3 (ITGA2B/ITGB3). This chain is Disintegrin horridistatin-2, found in Crotalus horridus (Timber rattlesnake).